Consider the following 327-residue polypeptide: DNA-directed RNA polymerase subunit alpha (327 aa).

The alpha N-terminal domain (alpha-NTD) stretch occupies residues 1-231 (MIYQMQMPAK…DHVTFFANFS (231 aa)). The alpha C-terminal domain (alpha-CTD) stretch occupies residues 252-327 (MRRLFHTKIE…GMDITKYQMK (76 aa)).

It belongs to the RNA polymerase alpha chain family. In terms of assembly, homodimer. The RNAP catalytic core consists of 2 alpha, 1 beta, 1 beta' and 1 omega subunit. When a sigma factor is associated with the core the holoenzyme is formed, which can initiate transcription.

The catalysed reaction is RNA(n) + a ribonucleoside 5'-triphosphate = RNA(n+1) + diphosphate. Functionally, DNA-dependent RNA polymerase catalyzes the transcription of DNA into RNA using the four ribonucleoside triphosphates as substrates. The protein is DNA-directed RNA polymerase subunit alpha of Pelodictyon phaeoclathratiforme (strain DSM 5477 / BU-1).